Here is a 321-residue protein sequence, read N- to C-terminus: NADPH-dependent codeinone reductase 1-1 (321 aa).

Residues Thr-27 and Asp-51 each coordinate NADPH. Active-site proton donor residues include Tyr-56 and His-119. His-119 lines the substrate pocket. Residues Gln-187, Ser-214, Leu-216, Ser-264, and Arg-269 each coordinate NADPH.

The protein belongs to the aldo/keto reductase family. In terms of tissue distribution, latex secreting cells (laticifer cells). Expressed constitutively and ubiquitously with highest levels in capsules. Restricted to the parietal region of sieve elements adjacent or proximal to laticifers in roots, stems, leaves and carpels.

It localises to the cytoplasm. The protein resides in the cytosol. The catalysed reaction is codeine + NADP(+) = codeinone + NADPH + H(+). The enzyme catalyses neopine + NADP(+) = neopinone + NADPH + H(+). It carries out the reaction morphine + NADP(+) = morphinone + NADPH + H(+). It catalyses the reaction neomorphine + NADP(+) = neomorphinone + NADPH + H(+). It functions in the pathway alkaloid biosynthesis; morphine biosynthesis. In terms of biological role, NADPH-dependent reductase involved in biosynthesis of morphinan-type benzylisoquinoline and opiate alkaloids natural products. Reduces codeinone to codeine in the penultimate step in morphine biosynthesis. Can use morphinone, hydrocodone and hydromorphone as substrate during reductive reaction with NADPH as cofactor, and morphine and dihydrocodeine as substrate during oxidative reaction with NADP as cofactor. Converts morphinone to morphine, and neomorphinone to neomorphine. Reduces irreversibly neopinone, a spontaneous isomer of codeinone, to neopine; in planta, neopine levels are limited to low levels. In Papaver somniferum (Opium poppy), this protein is NADPH-dependent codeinone reductase 1-1.